The following is a 234-amino-acid chain: Proteasome subunit alpha type-2 (234 aa).

A2 is modified (N-acetylalanine). Phosphotyrosine is present on Y121.

It belongs to the peptidase T1A family. As to quaternary structure, the 26S proteasome consists of a 20S proteasome core and two 19S regulatory subunits. The 20S proteasome core is composed of 28 subunits that are arranged in four stacked rings, resulting in a barrel-shaped structure. The two end rings are each formed by seven alpha subunits, and the two central rings are each formed by seven beta subunits. The catalytic chamber with the active sites is on the inside of the barrel.

It localises to the cytoplasm. It is found in the nucleus. Its function is as follows. The proteasome is a multicatalytic proteinase complex which is characterized by its ability to cleave peptides with Arg, Phe, Tyr, Leu, and Glu adjacent to the leaving group at neutral or slightly basic pH. The proteasome has an ATP-dependent proteolytic activity. PSMA2 may have a potential regulatory effect on another component(s) of the proteasome complex through tyrosine phosphorylation. In Carassius auratus (Goldfish), this protein is Proteasome subunit alpha type-2 (psma2).